The chain runs to 434 residues: Enolase (434 aa).

Position 167 (Gln167) interacts with (2R)-2-phosphoglycerate. Catalysis depends on Glu209, which acts as the Proton donor. Mg(2+) is bound by residues Asp246, Glu291, and Asp318. Lys343, Arg372, Ser373, and Lys394 together coordinate (2R)-2-phosphoglycerate. Lys343 acts as the Proton acceptor in catalysis.

Belongs to the enolase family. Component of the RNA degradosome, a multiprotein complex involved in RNA processing and mRNA degradation. Mg(2+) is required as a cofactor.

It is found in the cytoplasm. The protein localises to the secreted. It localises to the cell surface. It catalyses the reaction (2R)-2-phosphoglycerate = phosphoenolpyruvate + H2O. It participates in carbohydrate degradation; glycolysis; pyruvate from D-glyceraldehyde 3-phosphate: step 4/5. Catalyzes the reversible conversion of 2-phosphoglycerate (2-PG) into phosphoenolpyruvate (PEP). It is essential for the degradation of carbohydrates via glycolysis. This Buchnera aphidicola subsp. Acyrthosiphon pisum (strain APS) (Acyrthosiphon pisum symbiotic bacterium) protein is Enolase.